The chain runs to 249 residues: tRNA (guanine-N(1)-)-methyltransferase (249 aa).

S-adenosyl-L-methionine-binding positions include G112 and 132–137; that span reads LGDFVL.

It belongs to the RNA methyltransferase TrmD family. As to quaternary structure, homodimer.

The protein localises to the cytoplasm. The enzyme catalyses guanosine(37) in tRNA + S-adenosyl-L-methionine = N(1)-methylguanosine(37) in tRNA + S-adenosyl-L-homocysteine + H(+). Functionally, specifically methylates guanosine-37 in various tRNAs. This chain is tRNA (guanine-N(1)-)-methyltransferase, found in Citrifermentans bemidjiense (strain ATCC BAA-1014 / DSM 16622 / JCM 12645 / Bem) (Geobacter bemidjiensis).